The primary structure comprises 309 residues: Probable 2,4-dienoyl-CoA reductase decr-1.2 [(3E)-enoyl-CoA-producing] (309 aa).

NADP(+)-binding positions include 28–60 (VLVT…RRME), 32–37 (GGGTGI), arginine 57, and aspartate 83. Arginine 57 serves as a coordination point for substrate. Residues phenylalanine 116 and serine 124 each coordinate substrate. The active-site Proton acceptor is tyrosine 166. Residues lysine 181 and 207 to 210 (PGPI) each bind NADP(+). Residue arginine 218 participates in substrate binding.

This sequence belongs to the short-chain dehydrogenases/reductases (SDR) family. 2,4-dienoyl-CoA reductase subfamily.

The catalysed reaction is a (2E,4E)-dienoyl-CoA + NADPH + H(+) = a 4,5-saturated-(3E)-enoyl-CoA + NADP(+). It carries out the reaction a (2E,4Z)-dienoyl-CoA + NADPH + H(+) = a 4,5-saturated-(3E)-enoyl-CoA + NADP(+). Its function is as follows. Auxiliary enzyme of beta-oxidation. It participates in the metabolism of unsaturated fatty enoyl-CoA esters having double bonds in both even- and odd-numbered positions. Catalyzes the NADP-dependent reduction of 2,4-dienoyl-CoA to yield trans-3-enoyl-CoA. The protein is Probable 2,4-dienoyl-CoA reductase decr-1.2 [(3E)-enoyl-CoA-producing] of Caenorhabditis elegans.